The following is a 317-amino-acid chain: MFTKILGTGSYLPAHIRSNADLEKMVDTSDEWIVTRTGIRERRIARADETVSSMGRDAAEQALTMAGIAVQKVGMIIVATTSSSHAFPSSACQIQRELGINDCIAFDLAAACAGFSYALSVADNYIKNGAVEYALVVGSDALSHTLDPEDRGTLILFGDGAGAAVLGRSAEPGIISTHLHADGHYGDLLTLPYHNRLDPAASAYLTMSGNEVFKVAVTELAHIVDETLSANGLDRSELDWLVPHQANLRIITATAKRLGMGMEKVVVTLDRHGNTSAASVPLALDEAVRDGRIQPGHLVLLEAFGGGFTWGSALLRF.

Residues cysteine 112 and histidine 244 contribute to the active site. Residues 245-249 (QANLR) are ACP-binding. Asparagine 274 is a catalytic residue.

Belongs to the thiolase-like superfamily. FabH family. In terms of assembly, homodimer.

Its subcellular location is the cytoplasm. The catalysed reaction is malonyl-[ACP] + acetyl-CoA + H(+) = 3-oxobutanoyl-[ACP] + CO2 + CoA. It functions in the pathway lipid metabolism; fatty acid biosynthesis. In terms of biological role, catalyzes the condensation reaction of fatty acid synthesis by the addition to an acyl acceptor of two carbons from malonyl-ACP. Catalyzes the first condensation reaction which initiates fatty acid synthesis and may therefore play a role in governing the total rate of fatty acid production. Possesses both acetoacetyl-ACP synthase and acetyl transacylase activities. Its substrate specificity determines the biosynthesis of branched-chain and/or straight-chain of fatty acids. In Sodalis glossinidius (strain morsitans), this protein is Beta-ketoacyl-[acyl-carrier-protein] synthase III.